Reading from the N-terminus, the 288-residue chain is ATP synthase gamma chain (288 aa).

It belongs to the ATPase gamma chain family. F-type ATPases have 2 components, CF(1) - the catalytic core - and CF(0) - the membrane proton channel. CF(1) has five subunits: alpha(3), beta(3), gamma(1), delta(1), epsilon(1). CF(0) has three main subunits: a, b and c.

The protein resides in the cell inner membrane. Produces ATP from ADP in the presence of a proton gradient across the membrane. The gamma chain is believed to be important in regulating ATPase activity and the flow of protons through the CF(0) complex. This Paracidovorax citrulli (strain AAC00-1) (Acidovorax citrulli) protein is ATP synthase gamma chain.